The following is a 546-amino-acid chain: MAKDIKFSEDARRSMLNGVSKLADTVKVTLGPRGRNVVLEKSYGSPLITNDGVTIAKEIELENRFENMGAQLVSEVASKTNDIAGDGTTTATVLAQSIVSEGLKNVTSGANPLGIRRGIEQATQKAVEELQNISTPVESKEAIVQVGEVSSGSKQVGQYIADAMDKVGNDGVITIEDSQGIDTELDVVEGMQFDRGYLSQYMVTDNEKMEADLDSPYILITDKKISNIQDILPLLEQVVQESKPLLIIADDIDGEALPTLVLNKIRGTFNVVATKAPGFGDRRKAMLEDIAVLTGATVITEDLGLELKDATMDSLGKANKVTVDKDNTTIVEGAGDSTAIEDRVQLIKNQVAETTSDFDREKLQERLAKLAGGVAVIKVGAATETEQKELKLRIEDALNAARAGVEEGMVSGGGTALVNVINKVAELDADDDAITGVNIVLRALEEPVRQISENAGFEGSVIIEKLKSEKLGIGFNAATGQWVNMVDAGIVDPTKVVRSALQNAASISALLLSTEAVIADRPDESGNDAGAGAQGMDPSMMGGGMM.

Residues 29–32, 86–90, Gly-413, 476–478, and Asp-492 each bind ATP; these read TLGP, DGTTT, and NAA. The disordered stretch occupies residues 521–546; it reads RPDESGNDAGAGAQGMDPSMMGGGMM.

It belongs to the chaperonin (HSP60) family. As to quaternary structure, forms a cylinder of 14 subunits composed of two heptameric rings stacked back-to-back. Interacts with the co-chaperonin GroES.

It is found in the cytoplasm. The catalysed reaction is ATP + H2O + a folded polypeptide = ADP + phosphate + an unfolded polypeptide.. Functionally, together with its co-chaperonin GroES, plays an essential role in assisting protein folding. The GroEL-GroES system forms a nano-cage that allows encapsulation of the non-native substrate proteins and provides a physical environment optimized to promote and accelerate protein folding. This chain is Chaperonin GroEL, found in Tetragenococcus halophilus (Pediococcus halophilus).